The sequence spans 185 residues: Adenylyl-sulfate kinase (185 aa).

13-20 (GLSGAGKS) contributes to the ATP binding site. Ser-86 acts as the Phosphoserine intermediate in catalysis.

It belongs to the APS kinase family.

The catalysed reaction is adenosine 5'-phosphosulfate + ATP = 3'-phosphoadenylyl sulfate + ADP + H(+). It participates in sulfur metabolism; hydrogen sulfide biosynthesis; sulfite from sulfate: step 2/3. Functionally, catalyzes the synthesis of activated sulfate. This chain is Adenylyl-sulfate kinase, found in Myxococcus xanthus (strain DK1622).